Reading from the N-terminus, the 226-residue chain is PtdIns3K complex I subunit atg38 (226 aa).

An N-acetylserine modification is found at serine 2. Coiled-coil stretches lie at residues 52 to 85 (DVTQ…ENNI) and 182 to 209 (FKEY…LRER).

The protein belongs to the ATG38 family. As to quaternary structure, homodimer. Component of the autophagy-specific VPS34 PI3-kinase complex I composed of VPS15, VPS30, VPS34, ATG14 and an ATG38 homodimer. Interacts directly with ATG14 and VPS34.

It localises to the cytoplasm. It is found in the preautophagosomal structure membrane. Functionally, autophagy-related protein required for cytoplasm to vacuole transport (Cvt) and autophagy as a part of the autophagy-specific VPS34 PI3-kinase complex I. This complex is essential to recruit the ATG8-phosphatidylinositol conjugate and the ATG12-ATG5 conjugate to the pre-autophagosomal structure. ATG38 is required for the integrity of the active PI3-kinase complex I by maintaining an association between VPS15-VPS34 and ATG14-VPS30 subcomplexes. The sequence is that of PtdIns3K complex I subunit atg38 from Saccharomyces cerevisiae (strain ATCC 204508 / S288c) (Baker's yeast).